The chain runs to 476 residues: Cytosolic iron-sulfur assembly component 3 (476 aa).

The residue at position 2 (A2) is an N-acetylalanine. [4Fe-4S] cluster is bound by residues C24, C71, C74, C77, C190, C246, C395, and C399.

Belongs to the NARF family. As to quaternary structure, external component of the CIA complex. In the CIA complex, interacts directly with CIAO1 and MMS19.

In terms of biological role, component of the cytosolic iron-sulfur protein assembly (CIA) complex, a multiprotein complex that mediates the incorporation of iron-sulfur cluster into extramitochondrial Fe/S proteins. Seems to negatively regulate the level of HIF1A expression, although this effect could be indirect. The protein is Cytosolic iron-sulfur assembly component 3 of Pongo abelii (Sumatran orangutan).